A 220-amino-acid chain; its full sequence is MNKTLIINAHPKVDDTSSVSIKVFKHFLESYKELISNNETIEQINLYDDVVPMIDKTVLSAWEKQGNGQELTREEQKVTERMSEILQQFKSANTYVIVLPLHNFNIPSKLKDYMDNIMIARETFKYTETGSVGLLKDGRRMLVIQASGGIYTNDDWYTDVEYSHKYLKAMFNFLGIEDYQIVRAQGTAVLDPTEVLQNAYKEVEEAASRLANKYIFSLEE.

An FMN-binding site is contributed by 18-20 (SVS).

This sequence belongs to the azoreductase type 1 family. As to quaternary structure, homodimer. It depends on FMN as a cofactor.

The catalysed reaction is 2 a quinone + NADH + H(+) = 2 a 1,4-benzosemiquinone + NAD(+). The enzyme catalyses N,N-dimethyl-1,4-phenylenediamine + anthranilate + 2 NAD(+) = 2-(4-dimethylaminophenyl)diazenylbenzoate + 2 NADH + 2 H(+). Quinone reductase that provides resistance to thiol-specific stress caused by electrophilic quinones. In terms of biological role, also exhibits azoreductase activity. Catalyzes the reductive cleavage of the azo bond in aromatic azo compounds to the corresponding amines. This chain is FMN-dependent NADH:quinone oxidoreductase 1, found in Bacillus anthracis.